We begin with the raw amino-acid sequence, 153 residues long: Large ribosomal subunit protein uL15 (153 aa).

The tract at residues 21 to 42 (RGIGSGKGKTGGRGIKGQKSRS) is disordered. A compositionally biased stretch (gly residues) spans 23–35 (IGSGKGKTGGRGI).

The protein belongs to the universal ribosomal protein uL15 family. Part of the 50S ribosomal subunit.

In terms of biological role, binds to the 23S rRNA. The sequence is that of Large ribosomal subunit protein uL15 from Rickettsia peacockii (strain Rustic).